The following is a 502-amino-acid chain: Protein DETOXIFICATION 49 (502 aa).

Helical transmembrane passes span 41–61 (LPLILTGLLLYSRSMISMLFL), 75–95 (LALGFANITGYSLLSGLSIGM), 123–143 (LLCSLPISILWLNIKKILLFF), 153–173 (AEIFILFSLPDLILQSFLHPI), 190–210 (AFFAVLLHIPINYLLVSSLGL), 216–236 (ALGAIWTNVNLLGFLIIYIVF), 267–287 (VSVCLEWWWYEIMILLCGLLL), 293–313 (VASMGILIQTTALIYIFPSSL), 338–358 (RTGLSLSLGLGLLAMFFALMV), 372–392 (IVKLTSMVLPIIGLCELGNCP), 414–434 (LCCFYFVGMPVAVWLSFFSGF), and 439–459 (LWLGLFAAQGSCLISMLVVLA).

It belongs to the multi antimicrobial extrusion (MATE) (TC 2.A.66.1) family.

It is found in the membrane. In Arabidopsis thaliana (Mouse-ear cress), this protein is Protein DETOXIFICATION 49.